Here is a 450-residue protein sequence, read N- to C-terminus: tRNA-2-methylthio-N(6)-dimethylallyladenosine synthase (450 aa).

Residues 14–132 (GEFFIETWGC…FPNYLNEVKK (119 aa)) enclose the MTTase N-terminal domain. [4Fe-4S] cluster-binding residues include C23, C59, C93, C169, C173, and C176. One can recognise a Radical SAM core domain in the interval 155 to 385 (RKNSMKAFVT…VEVLNEISAK (231 aa)). Residues 388 to 450 (KAYEGKIEEV…NSFSLTGEEI (63 aa)) form the TRAM domain.

The protein belongs to the methylthiotransferase family. MiaB subfamily. As to quaternary structure, monomer. [4Fe-4S] cluster serves as cofactor.

It localises to the cytoplasm. The catalysed reaction is N(6)-dimethylallyladenosine(37) in tRNA + (sulfur carrier)-SH + AH2 + 2 S-adenosyl-L-methionine = 2-methylsulfanyl-N(6)-dimethylallyladenosine(37) in tRNA + (sulfur carrier)-H + 5'-deoxyadenosine + L-methionine + A + S-adenosyl-L-homocysteine + 2 H(+). Its function is as follows. Catalyzes the methylthiolation of N6-(dimethylallyl)adenosine (i(6)A), leading to the formation of 2-methylthio-N6-(dimethylallyl)adenosine (ms(2)i(6)A) at position 37 in tRNAs that read codons beginning with uridine. The polypeptide is tRNA-2-methylthio-N(6)-dimethylallyladenosine synthase (Clostridium botulinum (strain ATCC 19397 / Type A)).